The chain runs to 105 residues: Defensin-like protein 106 (105 aa).

The first 24 residues, 1-24 (MANTPKTLIAFVFSVIVIISYVHC), serve as a signal peptide directing secretion. Intrachain disulfides connect C57/C94, C63/C87, C73/C92, and C77/C93.

The protein belongs to the DEFL family.

It localises to the secreted. This is Defensin-like protein 106 from Arabidopsis thaliana (Mouse-ear cress).